A 131-amino-acid polypeptide reads, in one-letter code: MFGPFKLTSPVAGGLLWKIPWRMSTHQKTRQRERLRNVDQVIKQLTLGLHVQRCQDKGLTYQEAMESKKKYKPRSKSLRLLNKPSVFPKENQMSSKDKYWTFDKKAVGYRKGIHKVPKWTKISIRKAPKFF.

A mitochondrion-targeting transit peptide spans 1-12 (MFGPFKLTSPVA).

Belongs to the mitochondrion-specific ribosomal protein mL60 family. Component of the mitochondrial large ribosomal subunit (mt-LSU). Mature yeast 74S mitochondrial ribosomes consist of a small (37S) and a large (54S) subunit. The 37S small subunit contains a 15S ribosomal RNA (15S mt-rRNA) and 34 different proteins. The 54S large subunit contains a 21S rRNA (21S mt-rRNA) and 46 different proteins.

It localises to the mitochondrion. Its function is as follows. Component of the mitochondrial ribosome (mitoribosome), a dedicated translation machinery responsible for the synthesis of mitochondrial genome-encoded proteins, including at least some of the essential transmembrane subunits of the mitochondrial respiratory chain. The mitoribosomes are attached to the mitochondrial inner membrane and translation products are cotranslationally integrated into the membrane. This Saccharomyces cerevisiae (strain ATCC 204508 / S288c) (Baker's yeast) protein is Large ribosomal subunit protein mL60 (MRPL31).